A 553-amino-acid chain; its full sequence is Fusion glycoprotein F0 (553 aa).

The first 31 residues, 1–31 (MGSRSSTRIPVPLMLTVRIMLALSCVCPTSS), serve as a signal peptide directing secretion. The Extracellular segment spans residues 32 to 500 (LDGRPLAAAG…VNVKLTSTSA (469 aa)). 5 disulfides stabilise this stretch: Cys76/Cys199, Cys338/Cys347, Cys362/Cys370, Cys394/Cys399, and Cys401/Cys424. Asn85 carries an N-linked (GlcNAc...) asparagine; by host glycan. A fusion peptide region spans residues 117–141 (LIGAIIGGVALGVATAAQITAASAL). Positions 142-170 (IQANQNAANILRLKESIAATNEAVHEVTD) form a coiled coil. N-linked (GlcNAc...) asparagine; by host glycosylation occurs at Asn191. The N-linked (GlcNAc...) asparagine; by host glycan is linked to Asn366. Residues Asn447 and Asn471 are each glycosylated (N-linked (GlcNAc...) asparagine; by host). Residues 466-491 (ELGNVNNSISNALDKLEESNSKLDKV) adopt a coiled-coil conformation. Residues 501 to 521 (LITYIFLTVISLVCGILSLVL) traverse the membrane as a helical segment. Over 522 to 553 (ACYLMYKQKAQQKTLLWLGNNTLDQMRATTKM) the chain is Cytoplasmic. A lipid anchor (S-palmitoyl cysteine; by host) is attached at Cys523.

Belongs to the paramyxoviruses fusion glycoprotein family. As to quaternary structure, homotrimer of disulfide-linked F1-F2. The inactive precursor F0 is glycosylated and proteolytically cleaved into F1 and F2 to be functionally active. The cleavage is mediated by cellular proteases during the transport and maturation of the polypeptide.

Its subcellular location is the virion membrane. The protein resides in the host cell membrane. In terms of biological role, class I viral fusion protein. Under the current model, the protein has at least 3 conformational states: pre-fusion native state, pre-hairpin intermediate state, and post-fusion hairpin state. During viral and plasma cell membrane fusion, the heptad repeat (HR) regions assume a trimer-of-hairpins structure, positioning the fusion peptide in close proximity to the C-terminal region of the ectodomain. The formation of this structure appears to drive apposition and subsequent fusion of viral and plasma cell membranes. Directs fusion of viral and cellular membranes leading to delivery of the nucleocapsid into the cytoplasm. This fusion is pH independent and occurs directly at the outer cell membrane. The trimer of F1-F2 (F protein) probably interacts with HN at the virion surface. Upon HN binding to its cellular receptor, the hydrophobic fusion peptide is unmasked and interacts with the cellular membrane, inducing the fusion between cell and virion membranes. Later in infection, F proteins expressed at the plasma membrane of infected cells could mediate fusion with adjacent cells to form syncytia, a cytopathic effect that could lead to tissue necrosis. The chain is Fusion glycoprotein F0 (F) from Newcastle disease virus (strain D26/76) (NDV).